A 648-amino-acid chain; its full sequence is Threonine--tRNA ligase (648 aa).

The 61-residue stretch at 1 to 61 (MIKITLPDGS…TTDGNLILYT (61 aa)) folds into the TGS domain. The interval 240 to 539 (DHRKLGKELE…LLEHTAGNFP (300 aa)) is catalytic. Residues cysteine 335, histidine 386, and histidine 516 each contribute to the Zn(2+) site.

This sequence belongs to the class-II aminoacyl-tRNA synthetase family. In terms of assembly, homodimer. Zn(2+) is required as a cofactor.

Its subcellular location is the cytoplasm. It catalyses the reaction tRNA(Thr) + L-threonine + ATP = L-threonyl-tRNA(Thr) + AMP + diphosphate + H(+). In terms of biological role, catalyzes the attachment of threonine to tRNA(Thr) in a two-step reaction: L-threonine is first activated by ATP to form Thr-AMP and then transferred to the acceptor end of tRNA(Thr). Also edits incorrectly charged L-seryl-tRNA(Thr). This Flavobacterium johnsoniae (strain ATCC 17061 / DSM 2064 / JCM 8514 / BCRC 14874 / CCUG 350202 / NBRC 14942 / NCIMB 11054 / UW101) (Cytophaga johnsonae) protein is Threonine--tRNA ligase.